The chain runs to 257 residues: Major prion protein (257 aa).

The N-terminal stretch at M1–C24 is a signal peptide. Residues K25–A234 form an interaction with GRB2, ERI3 and SYN1 region. The interval P28 to M113 is disordered. A run of 5 repeats spans residues P54–Q62, P63–Q70, P71–Q78, P79–Q86, and P87–Q95. A 5 X 8 AA tandem repeats of P-H-G-G-G-W-G-Q region spans residues P54–Q95. The span at Q55–H100 shows a compositional bias: gly residues. H64, G65, G66, H72, G73, G74, H80, G81, G82, H88, G90, and G91 together coordinate Cu(2+). Cysteines 183 and 218 form a disulfide. N185 and N201 each carry an N-linked (GlcNAc...) asparagine glycan. A lipid anchor (GPI-anchor amidated alanine) is attached at A234. Positions S235–G257 are cleaved as a propeptide — removed in mature form.

This sequence belongs to the prion family. Monomer and homodimer. Has a tendency to aggregate into amyloid fibrils containing a cross-beta spine, formed by a steric zipper of superposed beta-strands. Soluble oligomers may represent an intermediate stage on the path to fibril formation. Copper binding may promote oligomerization. Interacts with GRB2, APP, ERI3/PRNPIP and SYN1. Mislocalized cytosolically exposed PrP interacts with MGRN1; this interaction alters MGRN1 subcellular location and causes lysosomal enlargement. Interacts with KIAA1191.

Its subcellular location is the cell membrane. The protein resides in the golgi apparatus. Its function is as follows. Its primary physiological function is unclear. Has cytoprotective activity against internal or environmental stresses. May play a role in neuronal development and synaptic plasticity. May be required for neuronal myelin sheath maintenance. May play a role in iron uptake and iron homeostasis. Soluble oligomers are toxic to cultured neuroblastoma cells and induce apoptosis (in vitro). Association with GPC1 (via its heparan sulfate chains) targets PRNP to lipid rafts. Also provides Cu(2+) or Zn(2+) for the ascorbate-mediated GPC1 deaminase degradation of its heparan sulfate side chains. The polypeptide is Major prion protein (PRNP) (Sus scrofa (Pig)).